A 191-amino-acid chain; its full sequence is UPF0302 protein USA300HOU_1400 (191 aa).

The protein belongs to the UPF0302 family.

This chain is UPF0302 protein USA300HOU_1400, found in Staphylococcus aureus (strain USA300 / TCH1516).